Here is a 343-residue protein sequence, read N- to C-terminus: S-adenosylmethionine:tRNA ribosyltransferase-isomerase (343 aa).

Belongs to the QueA family. As to quaternary structure, monomer.

It is found in the cytoplasm. The enzyme catalyses 7-aminomethyl-7-carbaguanosine(34) in tRNA + S-adenosyl-L-methionine = epoxyqueuosine(34) in tRNA + adenine + L-methionine + 2 H(+). It participates in tRNA modification; tRNA-queuosine biosynthesis. Transfers and isomerizes the ribose moiety from AdoMet to the 7-aminomethyl group of 7-deazaguanine (preQ1-tRNA) to give epoxyqueuosine (oQ-tRNA). The chain is S-adenosylmethionine:tRNA ribosyltransferase-isomerase from Geotalea uraniireducens (strain Rf4) (Geobacter uraniireducens).